We begin with the raw amino-acid sequence, 172 residues long: 3-phenylpropionate/cinnamic acid dioxygenase subunit beta (172 aa).

It belongs to the bacterial ring-hydroxylating dioxygenase beta subunit family. In terms of assembly, this dioxygenase system consists of four proteins: the two subunits of the hydroxylase component (HcaE and HcaF), a ferredoxin (HcaC) and a ferredoxin reductase (HcaD).

The catalysed reaction is 3-phenylpropanoate + NADH + O2 + H(+) = 3-(cis-5,6-dihydroxycyclohexa-1,3-dien-1-yl)propanoate + NAD(+). It carries out the reaction (E)-cinnamate + NADH + O2 + H(+) = (2E)-3-(cis-5,6-dihydroxycyclohexa-1,3-dien-1-yl)prop-2-enoate + NAD(+). The protein operates within aromatic compound metabolism; 3-phenylpropanoate degradation. Part of the multicomponent 3-phenylpropionate dioxygenase. Converts 3-phenylpropionic acid (PP) and cinnamic acid (CI) into 3-phenylpropionate-dihydrodiol (PP-dihydrodiol) and cinnamic acid-dihydrodiol (CI-dihydrodiol), respectively. This is 3-phenylpropionate/cinnamic acid dioxygenase subunit beta from Shigella sonnei (strain Ss046).